The following is a 337-amino-acid chain: MRVLGIETSCDETGIAIYDDEKGLLANQLYSQVKLHADYGGVVPELASRDHVRKTVPLIQAALKESGLTAKDIDAVAYTAGPGLVGALLVGATVGRSLAFAWNVPAIPVHHMEGHLLAPMLEDNPPEFPFVALLVSGGHTQLISVTGIGQYELLGESIDDAAGEAFDKTAKLLGLDYPGGPLLSKMAAQGTAGRFVFPRPMTDRPGLDFSFSGLKTFAANTIRDNGTDDQTRADIARAFEDAVVDTLMIKCKRALDQTGFKRLVMAGGVSANRTLRAKLAEMMKKRRGEVFYARPEFCTDNGAMIAYAGMVRFKAGATADLGVSVRPRWPLAELPAA.

2 residues coordinate Fe cation: His-111 and His-115. Residues 134 to 138 (LVSGG), Asp-167, Gly-180, and Asn-272 each bind substrate. Position 300 (Asp-300) interacts with Fe cation.

The protein belongs to the KAE1 / TsaD family. It depends on Fe(2+) as a cofactor.

It localises to the cytoplasm. The catalysed reaction is L-threonylcarbamoyladenylate + adenosine(37) in tRNA = N(6)-L-threonylcarbamoyladenosine(37) in tRNA + AMP + H(+). Its function is as follows. Required for the formation of a threonylcarbamoyl group on adenosine at position 37 (t(6)A37) in tRNAs that read codons beginning with adenine. Is involved in the transfer of the threonylcarbamoyl moiety of threonylcarbamoyl-AMP (TC-AMP) to the N6 group of A37, together with TsaE and TsaB. TsaD likely plays a direct catalytic role in this reaction. This chain is tRNA N6-adenosine threonylcarbamoyltransferase, found in Escherichia coli O139:H28 (strain E24377A / ETEC).